The chain runs to 1416 residues: Non-structural polyprotein 1AB (1416 aa).

Residues 104–146 (KLIHKANALQERLRLSQEEKATLTLDVQFLQHENVRLKELISK) are a coiled coil. A run of 5 helical transmembrane segments spans residues 154–174 (MKWI…GGYA), 239–259 (VFYY…LAIG), 286–306 (VLPT…TLMV), 313–333 (LLAI…LCFM), and 344–364 (GLIA…LTGT). Residues His461, Asp489, and Ser551 each act as charge relay system; for serine protease activity in the active site. A coiled-coil region spans residues 587 to 614 (VKAPSQVELLKEEIERLKAQLNSAAENP). O-(5'-phospho-RNA)-tyrosine is present on Tyr693. Residues 752 to 815 (NFDQAKPTPA…DPQPYSQTYG (64 aa)) are disordered. Residues 783-795 (SQKKDKQLEHEQQ) are compositionally biased toward basic and acidic residues. Over residues 805-814 (NDPQPYSQTY) the composition is skewed to polar residues. The region spanning 1161 to 1287 (KYFIEFDWTR…TTPSVPENYE (127 aa)) is the RdRp catalytic domain.

It belongs to the astroviridae polyprotein 1AB family. As to quaternary structure, monomer. In terms of processing, cleaved by the viral and host proteases. The protease is probably autocatalytically cleaved.

The protein resides in the host membrane. The catalysed reaction is RNA(n) + a ribonucleoside 5'-triphosphate = RNA(n+1) + diphosphate. Functionally, responsible for the cleavage of the polyprotein into functional products. Its function is as follows. Protein covalently attached to the 5' extremity of the genomic and subgenomic RNAs. It may serve as a primer for the replicase. This is Non-structural polyprotein 1AB (ORF1) from Homo sapiens (Human).